Here is a 163-residue protein sequence, read N- to C-terminus: 3-isopropylmalate dehydratase small subunit (163 aa).

The protein belongs to the LeuD family. LeuD type 2 subfamily. Heterodimer of LeuC and LeuD.

It catalyses the reaction (2R,3S)-3-isopropylmalate = (2S)-2-isopropylmalate. It participates in amino-acid biosynthesis; L-leucine biosynthesis; L-leucine from 3-methyl-2-oxobutanoate: step 2/4. Functionally, catalyzes the isomerization between 2-isopropylmalate and 3-isopropylmalate, via the formation of 2-isopropylmaleate. The sequence is that of 3-isopropylmalate dehydratase small subunit from Endomicrobium trichonymphae.